Here is a 270-residue protein sequence, read N- to C-terminus: Acetylglutamate kinase (270 aa).

Substrate contacts are provided by residues 41–42, Arg63, and Asn166; that span reads GG.

The protein belongs to the acetylglutamate kinase family. ArgB subfamily.

Its subcellular location is the cytoplasm. It catalyses the reaction N-acetyl-L-glutamate + ATP = N-acetyl-L-glutamyl 5-phosphate + ADP. The protein operates within amino-acid biosynthesis; L-arginine biosynthesis; N(2)-acetyl-L-ornithine from L-glutamate: step 2/4. In terms of biological role, catalyzes the ATP-dependent phosphorylation of N-acetyl-L-glutamate. The protein is Acetylglutamate kinase of Anaeromyxobacter dehalogenans (strain 2CP-C).